Reading from the N-terminus, the 452-residue chain is Maltoporin (452 aa).

The first 25 residues, 1-25, serve as a signal peptide directing secretion; that stretch reads MMITLRKLPLAVAVAAGVMSAQAMA.

It belongs to the porin LamB (TC 1.B.3) family. As to quaternary structure, homotrimer formed of three 18-stranded antiparallel beta-barrels, containing three independent channels.

The protein localises to the cell outer membrane. It carries out the reaction beta-maltose(in) = beta-maltose(out). Functionally, involved in the transport of maltose and maltodextrins. The chain is Maltoporin from Salmonella heidelberg (strain SL476).